The chain runs to 282 residues: Transformer-2 protein homolog alpha (282 aa).

Positions 1–118 (MSDVEENNFE…TGSRANPDPN (118 aa)) are disordered. At serine 2 the chain carries N-acetylserine. 2 positions are modified to phosphoserine: serine 2 and serine 14. Threonine 24 carries the post-translational modification Phosphothreonine. Basic residues predominate over residues 51–84 (RSRSKSRSRSRRHSHRRYTRSRSHSHSHRRRSRS). A phosphoserine mark is found at serine 82, serine 84, and serine 86. Threonine 88 carries the phosphothreonine modification. Over residues 92–110 (RRRRSRSHSPMSNRRRHTG) the composition is skewed to basic residues. Serine 96 and serine 98 each carry phosphoserine. One can recognise an RRM domain in the interval 119–197 (TCLGVFGLSL…RRIRVDYSIT (79 aa)). Lysine 198 participates in a covalent cross-link: Glycyl lysine isopeptide (Lys-Gly) (interchain with G-Cter in SUMO2). The tract at residues 198–225 (KRAHTPTPGIYMGRPTHSGGGGGGGGGG) is linker. 2 disordered regions span residues 201–245 (HTPT…YDRG) and 260–282 (SPSP…PRRY). 2 positions are modified to phosphothreonine: threonine 202 and threonine 204. Positions 215 to 230 (SGGGGGGGGGGGGGGG) are enriched in gly residues. Arginine 232 carries the omega-N-methylarginine modification. Residues 232 to 245 (RRRDSYYDRGYDRG) show a composition bias toward basic and acidic residues. A Phosphoserine modification is found at serine 236. The span at 268-282 (YRSRSRSRSYSPRRY) shows a compositional bias: basic residues.

This sequence belongs to the splicing factor SR family. In terms of assembly, binds to A3 enhancer proteins SRp75, SRp55, SRp40 and SRp30. Interacts with ILDR1 (via C-terminus) and ILDR2. In terms of processing, phosphorylated in the RS domains.

The protein resides in the nucleus. Functionally, sequence-specific RNA-binding protein which participates in the control of pre-mRNA splicing. The chain is Transformer-2 protein homolog alpha from Homo sapiens (Human).